The following is a 975-amino-acid chain: NLR family member X1 (975 aa).

The transit peptide at 1 to 86 directs the protein to the mitochondrion; the sequence is MRWGHHLPRA…EAIQRHRRNL (86 aa). Positions 75 to 556 are required for interaction with MAVS; the sequence is ATEAIQRHRR…RALPLLFNLI (482 aa). One can recognise an NACHT domain in the interval 160–483; it reads QTVVLYGTVG…LRFFLAPCVE (324 aa). 166 to 173 contacts ATP; sequence GTVGTGKS. Residues 556-974 are required for the repression of MAVS-induced interferon signaling; sequence IKVVPRVFGR…ALLEQLGSSG (419 aa). The 28-residue stretch at 667–694 folds into the LRRNT domain; sequence RQVLPPSELLDHLFFHYEFQNQRFSAEV. 8 LRR repeats span residues 695 to 718, 724 to 747, 749 to 777, 778 to 801, 811 to 834, 835 to 857, 858 to 877, and 878 to 899; these read LSSL…VVAA, RHAL…TLLP, FLRA…LLHD, QCQI…VLME, HLSL…LDRN, RQLQ…ALAR, AARE…ELSS, and EGRQ…VVVS. The LRRCT domain occupies 906-970; the sequence is VSEYWSVILS…GEVRALLEQL (65 aa).

This sequence belongs to the NLRP family. Homohexamer. Interacts with MAVS. Interacts with TUFM. As to quaternary structure, (Microbial infection) Interacts with influenza A virus protein PB1-F2. Ubiquitously expressed. Strongest expression in mammary gland, heart and muscle. Detected in HeLa, HEK293T, THP-1, HL-60, Raji and Jurkat cell lines (at protein level).

Its subcellular location is the mitochondrion outer membrane. Functionally, participates in antiviral signaling. Acts as a negative regulator of MAVS-mediated antiviral responses, through the inhibition of the virus-induced RLH (RIG-like helicase)-MAVS interaction. Instead, promotes autophagy by interacting with TUFM and subsequently recruiting the autophagy-related proteins ATG5 and ATG12. Also regulates MAVS-dependent NLRP3 inflammasome activation to attenuate apoptosis. Has no inhibitory function on NF-kappa-B signaling pathway, but enhances NF-kappa-B and JUN N-terminal kinase dependent signaling through the production of reactive oxygen species. Regulates viral mediated-inflammation and energy metabolism in a sex-dependent manner. In females, prevents uncontrolled inflammation and energy metabolism and thus, may contribute to the sex differences observed in infectious and inflammatory diseases. The protein is NLR family member X1 (NLRX1) of Homo sapiens (Human).